Consider the following 368-residue polypeptide: 2-aminoethylphosphonate--pyruvate transaminase (368 aa).

The residue at position 192 (Lys-192) is an N6-(pyridoxal phosphate)lysine.

This sequence belongs to the class-V pyridoxal-phosphate-dependent aminotransferase family. PhnW subfamily. In terms of assembly, homodimer. The cofactor is pyridoxal 5'-phosphate.

It catalyses the reaction (2-aminoethyl)phosphonate + pyruvate = phosphonoacetaldehyde + L-alanine. Functionally, involved in phosphonate degradation. In Pseudomonas putida (strain ATCC 47054 / DSM 6125 / CFBP 8728 / NCIMB 11950 / KT2440), this protein is 2-aminoethylphosphonate--pyruvate transaminase.